The following is a 360-amino-acid chain: UPF0283 membrane protein Oant_2119 (360 aa).

The tract at residues 1–30 (MTEKTPRKPASFTVSQASNRPEAADEAPRR) is disordered. 2 helical membrane-spanning segments follow: residues 77–97 (ILFG…TEDL) and 108–128 (LGWT…AIVV).

This sequence belongs to the UPF0283 family.

It is found in the cell inner membrane. This is UPF0283 membrane protein Oant_2119 from Brucella anthropi (strain ATCC 49188 / DSM 6882 / CCUG 24695 / JCM 21032 / LMG 3331 / NBRC 15819 / NCTC 12168 / Alc 37) (Ochrobactrum anthropi).